Here is a 496-residue protein sequence, read N- to C-terminus: Transcription factor CP2 (496 aa).

The region spanning 61-300 (ENKILPFQYV…SPGFNSSHSS (240 aa)) is the Grh/CP2 DB domain. The interval 133–386 (EHQQLEGWRW…LFNALKGRMV (254 aa)) is DNA-binding. Disordered regions lie at residues 238 to 268 (FKPK…YQPS) and 296 to 327 (SSHS…LLPT). The span at 241 to 265 (KGADRKQKTDREKMEKRTPHEKEKY) shows a compositional bias: basic and acidic residues.

It belongs to the grh/CP2 family. CP2 subfamily. As to quaternary structure, component of the SSP (stage selector protein) complex, which appears to be a heteromer of TFCP2 and 2 copies of NFE4. As to expression, expressed in the epiblast at the pre-primitive streak stage. At the primitive streak stage, expressed in the extending primitive streak and in the prospective neural plate. At stages 7 and 8, expressed in the neural folds, somites and in the regressing primitive streak. At stage 12, ubiquitously expressed in the whole embryo.

The protein resides in the nucleus. Binds the B-response element 5'-CAAGTCCAGGCAAGT-3' of the ENS1/ERNI promoter. May be the major transcription activator thus being essential for its expression. This Gallus gallus (Chicken) protein is Transcription factor CP2 (TFCP2).